The chain runs to 142 residues: uncharacterized protein (142 aa).

Residues 18 to 137 (QSSGYSCGPA…KIFTGNVLVV (120 aa)) enclose the Peptidase C39 domain.

This is an uncharacterized protein from Methanothermobacter marburgensis (strain ATCC BAA-927 / DSM 2133 / JCM 14651 / NBRC 100331 / OCM 82 / Marburg) (Methanobacterium thermoautotrophicum).